A 202-amino-acid polypeptide reads, in one-letter code: Probable adenylyl-sulfate kinase (202 aa).

36-43 (GLSGSGKS) is an ATP binding site. The active-site Phosphoserine intermediate is the S110.

The protein belongs to the APS kinase family.

The enzyme catalyses adenosine 5'-phosphosulfate + ATP = 3'-phosphoadenylyl sulfate + ADP + H(+). It functions in the pathway sulfur metabolism; hydrogen sulfide biosynthesis; sulfite from sulfate: step 2/3. Catalyzes the synthesis of activated sulfate. The chain is Probable adenylyl-sulfate kinase from Halalkalibacterium halodurans (strain ATCC BAA-125 / DSM 18197 / FERM 7344 / JCM 9153 / C-125) (Bacillus halodurans).